The following is a 206-amino-acid chain: Orotate phosphoribosyltransferase (206 aa).

5-phospho-alpha-D-ribose 1-diphosphate-binding positions include arginine 97, lysine 98, lysine 101, and asparagine 125–serine 133. Arginine 157 provides a ligand contact to orotate.

This sequence belongs to the purine/pyrimidine phosphoribosyltransferase family. PyrE subfamily. Homodimer. Mg(2+) is required as a cofactor.

The enzyme catalyses orotidine 5'-phosphate + diphosphate = orotate + 5-phospho-alpha-D-ribose 1-diphosphate. It participates in pyrimidine metabolism; UMP biosynthesis via de novo pathway; UMP from orotate: step 1/2. Its function is as follows. Catalyzes the transfer of a ribosyl phosphate group from 5-phosphoribose 1-diphosphate to orotate, leading to the formation of orotidine monophosphate (OMP). This Chlamydia felis (strain Fe/C-56) (Chlamydophila felis) protein is Orotate phosphoribosyltransferase.